Here is a 365-residue protein sequence, read N- to C-terminus: Oligosaccharides import ATP-binding protein MsmX (365 aa).

In terms of domain architecture, ABC transporter spans 4–235 (LRMEHIYKFY…PENVFVGGFI (232 aa)). 37–44 (GPSGCGKS) is an ATP binding site.

Belongs to the ABC transporter superfamily. As to quaternary structure, the complex involved in maltodextrin import is composed of two ATP-binding proteins (MsmX), two transmembrane proteins (MdxF and MdxG) and a solute-binding protein (MdxE). The complex involved in arabinooligosaccharides uptake is composed of two ATP-binding proteins (MsmX), two transmembrane proteins (AraP and AraQ) and a solute-binding protein (AraN). The complex involved in galactooligosaccharides uptake is composed of two ATP-binding proteins (MsmX), two transmembrane proteins (GanP and GanQ) and a solute-binding protein (GanS). The complex involved in melibiose, raffinose and stachyose import is composed of two ATP-binding proteins (MsmX), two transmembrane proteins (MelC and MelD) and a solute-binding protein (MelE). The complex involved in polygalacturonan and rhamnogalacturonan type I uptake is probably composed of two ATP-binding proteins (MsmX), two transmembrane proteins (YtcP and YteP) and a solute-binding protein (YtcQ).

Its subcellular location is the cell membrane. In terms of biological role, required to energize different ABC-type saccharide transporters. Part of the MdxEFG-MsmX ABC transporter complex involved in maltodextrin import, of the AraNPQ-MsmX complex involved in arabinooligosaccharides import, of the GanPQS-MsmX complex involved in galactooligosaccharides import, and of the MelEDC-MsmX complex involved in melibiose, raffinose and stachyose import. Is probably also part of the ABC transporter complex YtcQP-YteP-MsmX involved in polygalacturonan and rhamnogalacturonan type I import during pectin degradation. Responsible for energy coupling to the transport system. The polypeptide is Oligosaccharides import ATP-binding protein MsmX (msmX) (Bacillus subtilis (strain 168)).